We begin with the raw amino-acid sequence, 809 residues long: Acyl-homoserine lactone acylase QuiP (809 aa).

An N-terminal signal peptide occupies residues 1-26 (MASPAFSHFLPRFGVAAAVASALSLA). Serine 261 serves as the catalytic Nucleophile.

This sequence belongs to the peptidase S45 family. In terms of assembly, heterodimer of an alpha subunit and a beta subunit processed from the same precursor.

Its subcellular location is the periplasm. The enzyme catalyses an N-acyl-L-homoserine lactone + H2O = L-homoserine lactone + a carboxylate. Catalyzes the deacylation of acyl-homoserine lactone (AHL or acyl-HSL), releasing homoserine lactone (HSL) and the corresponding fatty acid. Possesses a specificity for the degradation of long-chain acyl-HSLs (side chains of seven or more carbons in length). This chain is Acyl-homoserine lactone acylase QuiP (quiP), found in Pseudomonas fluorescens (strain ATCC BAA-477 / NRRL B-23932 / Pf-5).